The chain runs to 122 residues: Biogenesis of lysosome-related organelles complex 1 subunit CNL1 (122 aa).

A compositionally biased stretch (basic and acidic residues) spans 1 to 10 (MQDNSSHSRE). The interval 1–21 (MQDNSSHSRESASAGDDPLGI) is disordered. Positions 63 to 95 (ENTIDKNIAKFKELLEKCDTLENHYEMLNQLAI) form a coiled coil.

This sequence belongs to the BLOC1S4 family. As to quaternary structure, component of the biogenesis of lysosome-related organelles complex-1 (BLOC-1) composed of at least BLI1, BLS1, CNL1, KXD1, SNN1 and VAB2.

Its subcellular location is the cytoplasm. Component of the biogenesis of lysosome-related organelles complex-1 (BLOC-1), a complex that is involved in endosomal cargo sorting. The protein is Biogenesis of lysosome-related organelles complex 1 subunit CNL1 (CNL1) of Saccharomyces cerevisiae (strain ATCC 204508 / S288c) (Baker's yeast).